The primary structure comprises 158 residues: NAD(P)H-quinone oxidoreductase subunit J, chloroplastic (158 aa).

This sequence belongs to the complex I 30 kDa subunit family. NDH is composed of at least 16 different subunits, 5 of which are encoded in the nucleus.

The protein localises to the plastid. It localises to the chloroplast thylakoid membrane. It carries out the reaction a plastoquinone + NADH + (n+1) H(+)(in) = a plastoquinol + NAD(+) + n H(+)(out). The enzyme catalyses a plastoquinone + NADPH + (n+1) H(+)(in) = a plastoquinol + NADP(+) + n H(+)(out). NDH shuttles electrons from NAD(P)H:plastoquinone, via FMN and iron-sulfur (Fe-S) centers, to quinones in the photosynthetic chain and possibly in a chloroplast respiratory chain. The immediate electron acceptor for the enzyme in this species is believed to be plastoquinone. Couples the redox reaction to proton translocation, and thus conserves the redox energy in a proton gradient. The chain is NAD(P)H-quinone oxidoreductase subunit J, chloroplastic from Lemna minor (Common duckweed).